Consider the following 960-residue polypeptide: Chromo domain-containing protein 1 (960 aa).

The 53-residue stretch at 22–74 (YEVEDILADRVNKNGINEYYIKWAGYDWYDNTWEPEQNLFGAEKVLKKWKKRK) folds into the Chromo domain.

Ago1, chp1 and tas3 interact to form the core of the RNA-induced transcriptional silencing (RITS) complex. The RITS complex interacts with the RDRC complex via interaction between ago1 and hrr1. Clr4 has a role in mediating this interaction. Interacts with dri1.

It localises to the nucleus. The protein resides in the cytoplasm. The protein localises to the cytoskeleton. Its subcellular location is the microtubule organizing center. It is found in the spindle pole body. Component of the kinetochore which plays a role in stabilizing microtubules and so allowing accurate chromosome segregation. Has a role in the RNA interference (RNAi) pathway which is important for heterochromatin formation and accurate chromosome segregation. A member of the RNA-induced transcriptional silencing (RITS) complex which is involved in the biosynthesis of dsRNA from primer siRNAs provided by the RNA-directed RNA polymerase (RDRC) complex. This chain is Chromo domain-containing protein 1, found in Schizosaccharomyces pombe (strain 972 / ATCC 24843) (Fission yeast).